The chain runs to 348 residues: Nitrogenase vanadium-iron protein beta chain (348 aa).

Cys-31, Cys-56, Cys-115, and Ser-153 together coordinate [8Fe-7S] cluster.

It belongs to the NifD/NifK/NifE/NifN family. Hexamer of two alpha, two beta, and two delta chains. It depends on [8Fe-7S] cluster as a cofactor.

The catalysed reaction is N2 + 8 reduced [2Fe-2S]-[ferredoxin] + 16 ATP + 16 H2O = H2 + 8 oxidized [2Fe-2S]-[ferredoxin] + 2 NH4(+) + 16 ADP + 16 phosphate + 6 H(+). This vanadium-iron protein is part of the nitrogenase complex that catalyzes the key enzymatic reactions in nitrogen fixation. This Azotobacter salinestris protein is Nitrogenase vanadium-iron protein beta chain (vnfK).